A 356-amino-acid polypeptide reads, in one-letter code: sn-glycerol-3-phosphate import ATP-binding protein UgpC (356 aa).

The region spanning 4–235 is the ABC transporter domain; the sequence is LKLQAVTKSW…PASLFVASFI (232 aa). Residue 37-44 coordinates ATP; it reads GPSGCGKS.

The protein belongs to the ABC transporter superfamily. sn-glycerol-3-phosphate importer (TC 3.A.1.1.3) family. The complex is composed of two ATP-binding proteins (UgpC), two transmembrane proteins (UgpA and UgpE) and a solute-binding protein (UgpB).

The protein resides in the cell inner membrane. The catalysed reaction is sn-glycerol 3-phosphate(out) + ATP + H2O = sn-glycerol 3-phosphate(in) + ADP + phosphate + H(+). Part of the ABC transporter complex UgpBAEC involved in sn-glycerol-3-phosphate (G3P) import. Responsible for energy coupling to the transport system. The sequence is that of sn-glycerol-3-phosphate import ATP-binding protein UgpC from Escherichia coli (strain UTI89 / UPEC).